The following is a 342-amino-acid chain: S-adenosylmethionine:tRNA ribosyltransferase-isomerase (342 aa).

The protein belongs to the QueA family. Monomer.

The protein resides in the cytoplasm. It catalyses the reaction 7-aminomethyl-7-carbaguanosine(34) in tRNA + S-adenosyl-L-methionine = epoxyqueuosine(34) in tRNA + adenine + L-methionine + 2 H(+). Its pathway is tRNA modification; tRNA-queuosine biosynthesis. Its function is as follows. Transfers and isomerizes the ribose moiety from AdoMet to the 7-aminomethyl group of 7-deazaguanine (preQ1-tRNA) to give epoxyqueuosine (oQ-tRNA). In Campylobacter jejuni subsp. jejuni serotype O:2 (strain ATCC 700819 / NCTC 11168), this protein is S-adenosylmethionine:tRNA ribosyltransferase-isomerase.